Here is a 113-residue protein sequence, read N- to C-terminus: MWDPLVNEFPDSVHGLRCMLAIKYLQALEDTYEPSTLGHELVRDLVSVIRARNYVEATRRYHHFHSRIQGSSKTELRQPIQEPCYCPHCPRHKSKTGLGEQAHVQKAHDVQDV.

Residues 94–113 (SKTGLGEQAHVQKAHDVQDV) are disordered.

This sequence belongs to the geminiviridae protein AV2/V2 family. As to quaternary structure, interacts with host SGS3.

Its subcellular location is the host cytoplasm. It localises to the host perinuclear region. Through its interaction with host SGS3, acts as a suppressor of RNA-mediated gene silencing, also known as post-transcriptional gene silencing (PTGS), a mechanism of plant viral defense that limits the accumulation of viral RNAs. The polypeptide is Protein AV2 (African cassava mosaic virus (isolate West Kenyan 844) (ACMV)).